The sequence spans 232 residues: 2-C-methyl-D-erythritol 4-phosphate cytidylyltransferase (232 aa).

It belongs to the IspD/TarI cytidylyltransferase family. IspD subfamily.

The enzyme catalyses 2-C-methyl-D-erythritol 4-phosphate + CTP + H(+) = 4-CDP-2-C-methyl-D-erythritol + diphosphate. It participates in isoprenoid biosynthesis; isopentenyl diphosphate biosynthesis via DXP pathway; isopentenyl diphosphate from 1-deoxy-D-xylulose 5-phosphate: step 2/6. Its function is as follows. Catalyzes the formation of 4-diphosphocytidyl-2-C-methyl-D-erythritol from CTP and 2-C-methyl-D-erythritol 4-phosphate (MEP). The protein is 2-C-methyl-D-erythritol 4-phosphate cytidylyltransferase of Geobacter metallireducens (strain ATCC 53774 / DSM 7210 / GS-15).